The chain runs to 253 residues: Triosephosphate isomerase, cytosolic (253 aa).

Substrate-binding residues include Asn-10 and Lys-12. His-96 (electrophile) is an active-site residue. The Proton acceptor role is filled by Glu-166.

Belongs to the triosephosphate isomerase family. As to quaternary structure, homodimer. Starchy endosperm.

The protein resides in the cytoplasm. It catalyses the reaction D-glyceraldehyde 3-phosphate = dihydroxyacetone phosphate. The protein operates within carbohydrate biosynthesis; gluconeogenesis. It functions in the pathway carbohydrate degradation; glycolysis; D-glyceraldehyde 3-phosphate from glycerone phosphate: step 1/1. In Hordeum vulgare (Barley), this protein is Triosephosphate isomerase, cytosolic.